Here is a 100-residue protein sequence, read N- to C-terminus: Urease subunit gamma (100 aa).

This sequence belongs to the urease gamma subunit family. Heterotrimer of UreA (gamma), UreB (beta) and UreC (alpha) subunits. Three heterotrimers associate to form the active enzyme.

The protein localises to the cytoplasm. It carries out the reaction urea + 2 H2O + H(+) = hydrogencarbonate + 2 NH4(+). The protein operates within nitrogen metabolism; urea degradation; CO(2) and NH(3) from urea (urease route): step 1/1. This Limosilactobacillus fermentum (Lactobacillus fermentum) protein is Urease subunit gamma.